The primary structure comprises 300 residues: UDP-N-acetylenolpyruvoylglucosamine reductase (300 aa).

In terms of domain architecture, FAD-binding PCMH-type spans 27-216; the sequence is RVGGPADVIF…TERREKTQPI (190 aa). Residue arginine 172 is part of the active site. Serine 223 acts as the Proton donor in catalysis. Glutamate 293 is a catalytic residue.

It belongs to the MurB family. It depends on FAD as a cofactor.

The protein localises to the cytoplasm. The enzyme catalyses UDP-N-acetyl-alpha-D-muramate + NADP(+) = UDP-N-acetyl-3-O-(1-carboxyvinyl)-alpha-D-glucosamine + NADPH + H(+). It functions in the pathway cell wall biogenesis; peptidoglycan biosynthesis. Functionally, cell wall formation. The polypeptide is UDP-N-acetylenolpyruvoylglucosamine reductase (Phenylobacterium zucineum (strain HLK1)).